We begin with the raw amino-acid sequence, 73 residues long: Beta-defensin 40 (73 aa).

A signal peptide spans 1–23 (MKISCFLLMIFFLSCFQINPVAV). 3 cysteine pairs are disulfide-bonded: Cys-29–Cys-58, Cys-36–Cys-51, and Cys-41–Cys-59.

This sequence belongs to the beta-defensin family. As to expression, only expressed in epididymis (corpus, cauda and caput).

The protein resides in the secreted. Its function is as follows. Has antibacterial activity. The sequence is that of Beta-defensin 40 (Defb40) from Mus musculus (Mouse).